The chain runs to 165 residues: Choriogonadotropin subunit beta (165 aa).

The N-terminal stretch at 1–20 (METLQGLLLWLLLSMGGAQA) is a signal peptide. 6 disulfide bridges follow: Cys-29-Cys-77, Cys-43-Cys-92, Cys-46-Cys-130, Cys-54-Cys-108, Cys-58-Cys-110, and Cys-113-Cys-120. Residues Asn-33 and Asn-50 are each glycosylated (N-linked (GlcNAc...) asparagine). The interval 131–165 (DDPNLQASSSSKDPPPSPPSPSRLLEPAGTPFLPQ) is disordered. Residues Ser-141, Ser-147, and Ser-152 are each glycosylated (O-linked (GalNAc...) serine).

The protein belongs to the glycoprotein hormones subunit beta family. In terms of assembly, heterodimer of a common alpha chain and a unique beta chain which confers biological specificity to thyrotropin, lutropin, follitropin and gonadotropin. Placenta.

The protein resides in the secreted. Stimulates the ovaries to synthesize the steroids that are essential for the maintenance of pregnancy. This chain is Choriogonadotropin subunit beta (CGB), found in Papio anubis (Olive baboon).